Here is a 199-residue protein sequence, read N- to C-terminus: Ribosome maturation factor RimM (199 aa).

The PRC barrel domain occupies 95 to 168; the sequence is EDEFYHADLV…FVRVDPVAAG (74 aa). Residues 167-199 are disordered; sequence AGLVEDEDGDAPREEDFDPKGRPRGPRDAGGNR. Basic and acidic residues predominate over residues 176 to 193; that stretch reads DAPREEDFDPKGRPRGPR.

This sequence belongs to the RimM family. Binds ribosomal protein uS19.

The protein resides in the cytoplasm. An accessory protein needed during the final step in the assembly of 30S ribosomal subunit, possibly for assembly of the head region. Essential for efficient processing of 16S rRNA. May be needed both before and after RbfA during the maturation of 16S rRNA. It has affinity for free ribosomal 30S subunits but not for 70S ribosomes. The polypeptide is Ribosome maturation factor RimM (Mesorhizobium japonicum (strain LMG 29417 / CECT 9101 / MAFF 303099) (Mesorhizobium loti (strain MAFF 303099))).